A 132-amino-acid polypeptide reads, in one-letter code: Secreted RxLR effector protein BLR08 (132 aa).

The signal sequence occupies residues 1–22 (MRHKCLLAMAVVASMAFYSVIS). An N-linked (GlcNAc...) asparagine glycan is attached at Asn-25. Residues 36–57 (NRRLRPRVEPTANELDKQSDVD) are disordered. The short motif at 37 to 83 (RRLRPRVEPTANELDKQSDVDTKLEADRRLGYPGESGFMLEGELEER) is the RxLR-dEER element. Residues 111-131 (FFLGLFASVIGVSIISACYGI) traverse the membrane as a helical segment.

Belongs to the RxLR effector family. In terms of assembly, interacts with host transcription factor NAC069.

It is found in the secreted. The protein resides in the host endoplasmic reticulum membrane. Functionally, secreted effector that inhibits stress-induced relocalization of the transcription factor NAC069 to the nucleus, thus affecting its broad role in abiotic and biotic stress responses. This chain is Secreted RxLR effector protein BLR08, found in Bremia lactucae (Lettuce downy mildew).